Consider the following 186-residue polypeptide: UPF0301 protein APL_0232 (186 aa).

This sequence belongs to the UPF0301 (AlgH) family.

This chain is UPF0301 protein APL_0232, found in Actinobacillus pleuropneumoniae serotype 5b (strain L20).